The sequence spans 122 residues: Large ribosomal subunit protein uL14 (122 aa).

This sequence belongs to the universal ribosomal protein uL14 family. As to quaternary structure, part of the 50S ribosomal subunit. Forms a cluster with proteins L3 and L19. In the 70S ribosome, L14 and L19 interact and together make contacts with the 16S rRNA in bridges B5 and B8.

Functionally, binds to 23S rRNA. Forms part of two intersubunit bridges in the 70S ribosome. The protein is Large ribosomal subunit protein uL14 of Mycoplasma mobile (strain ATCC 43663 / 163K / NCTC 11711) (Mesomycoplasma mobile).